Here is a 440-residue protein sequence, read N- to C-terminus: Enolase (440 aa).

Residues 120–189 (KAAAAEKRVP…TEAMRQGAEV (70 aa)) are igE-binding determinant. Positions 159 and 168 each coordinate substrate. Glu-211 functions as the Proton donor in the catalytic mechanism. Residues Asp-246, Glu-297, and Asp-324 each contribute to the Mg(2+) site. The substrate site is built by Glu-297 and Asp-324. The active-site Proton acceptor is the Lys-349. Residues 376-379 (SHRS) and Lys-400 contribute to the substrate site.

The protein belongs to the enolase family. Homodimer. The cofactor is Mg(2+).

It localises to the cytoplasm. The enzyme catalyses (2R)-2-phosphoglycerate = phosphoenolpyruvate + H2O. Its pathway is carbohydrate degradation; glycolysis; pyruvate from D-glyceraldehyde 3-phosphate: step 4/5. This is Enolase (ENO) from Davidiella tassiana (Mycosphaerella tassiana).